The primary structure comprises 232 residues: Ribonuclease P protein component 3 (232 aa).

Belongs to the eukaryotic/archaeal RNase P protein component 3 family. As to quaternary structure, consists of a catalytic RNA component and at least 4-5 protein subunits.

Its subcellular location is the cytoplasm. It catalyses the reaction Endonucleolytic cleavage of RNA, removing 5'-extranucleotides from tRNA precursor.. Part of ribonuclease P, a protein complex that generates mature tRNA molecules by cleaving their 5'-ends. The protein is Ribonuclease P protein component 3 of Methanococcus maripaludis (strain C6 / ATCC BAA-1332).